A 950-amino-acid chain; its full sequence is Inactive atromentin synthetase invA4 (950 aa).

Residues 37 to 460 (SRAVSQYPNH…SGRIKDTVVV (424 aa)) are adenylation (A) domain. One can recognise a Carrier domain in the interval 592-670 (APSTETEKTL…TLAKYVDSLV (79 aa)). Residues 597-667 (TEKTLAGIYA…EIITLAKYVD (71 aa)) are thiolation and peptide carrier (T) domain. Ser629 carries the post-translational modification O-(pantetheine 4'-phosphoryl)serine. The thioesterase (TE) domain stretch occupies residues 693-797 (PIFMVHPGIG…GIIDMIPHHM (105 aa)).

The protein belongs to the ATP-dependent AMP-binding enzyme family.

Functionally, inactive atromentin synthetase homolog. Does not accept 4-hydroxyphenylpyruvate (4-HPP) as substrate. The chain is Inactive atromentin synthetase invA4 (invA4) from Paxillus involutus (Naked brimcap).